The primary structure comprises 617 residues: Syncytin-A (617 aa).

A signal peptide spans 1–17 (MVRPWVFCLLLFPCSSA). The Extracellular portion of the chain corresponds to 18–544 (YSDSWMPLVN…WIQWLGLGPW (527 aa)). N-linked (GlcNAc...) asparagine glycosylation is present at Asn27. A CXXC motif is present at residues 44–47 (CWVC). 3 cysteine pairs are disulfide-bonded: Cys44-Cys47, Cys44-Cys505, and Cys497-Cys504. Residues Asn272 and Asn365 are each glycosylated (N-linked (GlcNAc...) asparagine). The segment at 420–440 (LLPLLAGLGIASALGLGIAGI) is fusion peptide. A CX6CC motif is present at residues 497 to 505 (CLFLQEECC). A helical transmembrane segment spans residues 545–565 (LPSWLTSLMAPILFILVLLVF). Topologically, residues 566-617 (RPCLLNCLTHSVSRRMSSFIHTTTEGHVDKILLLRESQYKRLPQEPPEEDAV) are cytoplasmic.

It belongs to the gamma type-C retroviral envelope protein family. In terms of assembly, the mature protein consists of a trimer of SU-TM heterodimers. The SU-TM heterodimers are attached by a labile interchain disulfide bond. Post-translationally, synthesized as an inactive precursor that is heavily N-glycosylated and processed likely by furin in the Golgi to yield the mature SU and TM proteins. The cleavage site between SU and TM requires the minimal sequence [KR]-X-[KR]-R. The CXXC motif is highly conserved across a broad range of retroviral envelope proteins. It is thought to participate in the formation of a labile disulfide bond possibly with the CX6CC motif present in the transmembrane protein. Isomerization of the intersubunit disulfide bond to an SU intrachain disulfide bond is thought to occur upon receptor recognition in order to allow membrane fusion. As to expression, highly expressed in placenta where it localizes to syncytiotrophoblasts of the labyrinthine zona. Specifically localizes to syncytiotrophoblast layer I (SynT-I). Also detected at very low levels in hippocampus, brain, testis and ovary.

Its subcellular location is the cell membrane. This endogenous retroviral envelope protein has retained its original fusogenic properties. Together with Synb, participates in trophoblast fusion and the formation of a syncytium during placenta morphogenesis. Syna is essential for placental development and is specifically required for formation of syncytiotrophoblast layer I (SynT-I). Promotes muscle myoblast fusion. Does not have immunosuppressive activity. This chain is Syncytin-A, found in Mus musculus (Mouse).